Reading from the N-terminus, the 152-residue chain is UPF0266 membrane protein YobD (152 aa).

A run of 3 helical transmembrane segments spans residues 6-26 (LVLI…QFIM), 45-65 (IDSV…VTNH), and 67-87 (ALIT…IFWI).

Belongs to the UPF0266 family.

Its subcellular location is the cell inner membrane. This is UPF0266 membrane protein YobD from Escherichia coli O157:H7 (strain EC4115 / EHEC).